Consider the following 462-residue polypeptide: Retinoic acid receptor alpha (462 aa).

Positions 1-87 (MASNSSSCPT…PPPLPRIYKP (87 aa)) are modulating. Residues 52–64 (GYSTPSPATIETQ) show a composition bias toward polar residues. The tract at residues 52 to 77 (GYSTPSPATIETQSSSSEEIVPSPPS) is disordered. Ser-77 carries the phosphoserine; by CDK7 modification. 2 NR C4-type zinc fingers span residues 88–108 (CFVC…CEGC) and 124–148 (CHRD…LQKC). The segment at residues 88-153 (CFVCQDKSSG…RLQKCFDVGM (66 aa)) is a DNA-binding region (nuclear receptor). The residue at position 96 (Ser-96) is a Phosphoserine; by PKB/AKT1. The segment at 154 to 182 (SKESVRNDRNKKKKEAPKPECSESYTLTP) is hinge. Glycyl lysine isopeptide (Lys-Gly) (interchain with G-Cter in SUMO) cross-links involve residues Lys-166 and Lys-171. In terms of domain architecture, NR LBD spans 183-417 (EVGELIEKVR…PLIQEMLENS (235 aa)). Ser-219 bears the Phosphoserine; by PKA mark. Cys-235 lines the all-trans-retinoate pocket. The UBR5-degron motif lies at 254-258 (IADQI). Ser-287 contributes to the all-trans-retinoate binding site. At Lys-347 the chain carries N6,N6,N6-trimethyllysine. Position 369 is a phosphoserine; by PKA and RPS6KA5 (Ser-369). Lys-399 is covalently cross-linked (Glycyl lysine isopeptide (Lys-Gly) (interchain with G-Cter in SUMO)). Positions 404–419 (GSMPPLIQEMLENSEG) are required for binding corepressor NCOR1. The short motif at 408–416 (PLIQEMLEN) is the 9aaTAD element. A disordered region spans residues 420–462 (LDTLSGQSGGGTRDGGGLAPPPGSCSPSLSPSSHRSSPATQSP). The span at 426-437 (QSGGGTRDGGGL) shows a compositional bias: gly residues. Low complexity predominate over residues 444–462 (CSPSLSPSSHRSSPATQSP).

It belongs to the nuclear hormone receptor family. NR1 subfamily. Heterodimer; with RXRA. Binds DNA preferentially as a heterodimer. RXRA serves as enhancer to induce RARA binding to RARE. Interacts with RXRG. Interacts with NCOA3 and NCOA6 coactivators, leading to a strong increase of transcription of target genes. Interacts with NCOA7; the interaction requires ligand-binding. Interacts (via the ligand-binding domain) with PRAME; interaction is direct and ligand (retinoic acid)-dependent. Interacts with PRKAR1A; the interaction negatively regulates RARA transcriptional activity. Interacts with NCOR1; the interaction occurs in the absence of ligand and represses transcriptional activity. Interacts with NCOR2. Interacts with PRMT2. Interacts with LRIF1. Interacts with ASXL1 and NCOA1. Interacts with ACTN4. Interacts with CDK7; the interaction is enhanced by interaction with GTF2H3. Interacts with GTF2H3; the interaction requires prior phosphorylation on Ser-369 which then enhances interaction with CDK7. In a complex with HDAC3, HDAC5 and HDAC7; the HDACs serve as corepressors of RARA, causing its deacetylation and inhibition of RARE DNA element binding; association with HDAC3, HDAC5 and HDAC7 is increased upon oscillatory shear stress. In the absence of hormonal ligand, interacts with TACC1. Post-translationally, phosphorylated on serine and threonine residues. Phosphorylation does not change during cell cycle. Phosphorylation on Ser-77 is crucial for the N-terminal AF1 transcriptional activity. Under stress conditions, MAPK8 enhances phosphorylation on Thr-181, Ser-445 and Ser-461 leading to RARA ubiquitination and degradation. Phosphorylation by AKT1 inhibits the transactivation activity. On retinoic acid stimulation, phosphorylation on Ser-369 by RPS6KA5 promotes interaction with GTF2H3 and the CDK7-mediated phosphorylation of Ser-77. Ubiquitinated by UBR5, leading to its degradation: UBR5 specifically recognizes and binds ligand-bound RARA when it is not associated with coactivators (NCOAs). In presence of NCOAs, the UBR5-degron is not accessible, preventing its ubiquitination and degradation. In terms of processing, sumoylated with SUMO2, mainly on Lys-399 which is also required for SENP6 binding. On all-trans retinoic acid (ATRA) binding, a conformational change may occur that allows sumoylation on two additional site, Lys-166 and Lys-171. Probably desumoylated by SENP6. Sumoylation levels determine nuclear localization and regulate ATRA-mediated transcriptional activity. Post-translationally, acetylated; acetylation is increased upon pulsatile shear stress and decreased upon oscillatory shear stress. As to expression, expressed in Sertoli cells and germ cells.

The protein localises to the nucleus. The protein resides in the cytoplasm. Functionally, receptor for retinoic acid. Retinoic acid receptors bind as heterodimers to their target response elements in response to their ligands, all-trans or 9-cis retinoic acid, and regulate gene expression in various biological processes. The RXR/RAR heterodimers bind to the retinoic acid response elements (RARE) composed of tandem 5'-AGGTCA-3' sites known as DR1-DR5. In the absence of ligand, the RXR-RAR heterodimers associate with a multiprotein complex containing transcription corepressors that induce histone deacetylation, chromatin condensation and transcriptional suppression. On ligand binding, the corepressors dissociate from the receptors and associate with the coactivators leading to transcriptional activation. Formation of heterocomplex with histone deacetylases might lead to inhibition of RARE DNA element binding and to transcriptional repression. Transcriptional activation and RARE DNA element binding might be supported by the transcription factor KLF2. RARA plays an essential role in the regulation of retinoic acid-induced germ cell development during spermatogenesis. Has a role in the survival of early spermatocytes at the beginning prophase of meiosis. In Sertoli cells, may promote the survival and development of early meiotic prophase spermatocytes. In concert with RARG, required for skeletal growth, matrix homeostasis and growth plate function. Together with RXRA, positively regulates microRNA-10a expression, thereby inhibiting the GATA6/VCAM1 signaling response to pulsatile shear stress in vascular endothelial cells. In association with HDAC3, HDAC5 and HDAC7 corepressors, plays a role in the repression of microRNA-10a and thereby promotes the inflammatory response. This is Retinoic acid receptor alpha (Rara) from Mus musculus (Mouse).